Reading from the N-terminus, the 488-residue chain is Fumarate hydratase, mitochondrial (488 aa).

Residues 1-24 constitute a mitochondrion transit peptide; the sequence is MLRFTNCSCKTFVKSSYKLNIRRM. Residues 124-126, 154-157, 164-166, and T212 each bind substrate; these read SGT, HPNN, and SSN. H213 functions as the Proton donor/acceptor in the catalytic mechanism. S343 is a catalytic residue. Substrate is bound by residues S344 and 349-351; that span reads KVN. T428 is subject to Phosphothreonine.

It belongs to the class-II fumarase/aspartase family. Fumarase subfamily. In terms of assembly, homotetramer.

The protein localises to the mitochondrion matrix. It localises to the cytoplasm. It is found in the nucleus. The catalysed reaction is (S)-malate = fumarate + H2O. Its pathway is carbohydrate metabolism; tricarboxylic acid cycle; (S)-malate from fumarate: step 1/1. In terms of biological role, catalyzes the reversible stereospecific interconversion of fumarate to L-malate. In mitochondrion, catalyzes the hydration of fumarate to L-malate in the tricarboxylic acid (TCA) cycle to facilitate a transition step in the production of energy in the form of NADH. In cytoplasm and nucleus, involved in DNA repair in response to DNA damage: following DNA double-strand breaks (DSBs), translocates from the cytosol to the nucleus and promotes DNA repair by catalyzing the dehydration of L-malate to fumarate. In Saccharomyces cerevisiae (strain ATCC 204508 / S288c) (Baker's yeast), this protein is Fumarate hydratase, mitochondrial.